We begin with the raw amino-acid sequence, 252 residues long: Probable transcriptional regulatory protein A1E_02520 (252 aa).

This sequence belongs to the TACO1 family.

It localises to the cytoplasm. The protein is Probable transcriptional regulatory protein A1E_02520 of Rickettsia canadensis (strain McKiel).